A 115-amino-acid polypeptide reads, in one-letter code: uncharacterized protein (115 aa).

The CHCH domain maps to 63 to 108; it reads GSPCGFEFREAITCQKTNSDGEIEQGACGKELMSFMECVTRTQCFG. Short sequence motifs (cx9C motif) lie at residues 66–76 and 90–100; these read CGFEFREAITC and CGKELMSFMEC. 2 disulfides stabilise this stretch: Cys66-Cys100 and Cys76-Cys90.

This is an uncharacterized protein from Caenorhabditis elegans.